Consider the following 29-residue polypeptide: Cytochrome b6-f complex subunit 8 (29 aa).

Residues 3-23 (TVSIAWAALMVIFTFSISLVV) form a helical membrane-spanning segment.

Belongs to the PetN family. The 4 large subunits of the cytochrome b6-f complex are cytochrome b6, subunit IV (17 kDa polypeptide, PetD), cytochrome f and the Rieske protein, while the 4 small subunits are PetG, PetL, PetM and PetN. The complex functions as a dimer.

The protein resides in the plastid. It is found in the chloroplast thylakoid membrane. In terms of biological role, component of the cytochrome b6-f complex, which mediates electron transfer between photosystem II (PSII) and photosystem I (PSI), cyclic electron flow around PSI, and state transitions. This is Cytochrome b6-f complex subunit 8 from Psilotum nudum (Whisk fern).